The chain runs to 324 residues: MGFLYSQLFKSLPYPTGNYSGKTIVITGSNVGLGKEAARHYVRLGASKMILAVRSLDKGHDAKHDIEGTTKCADNVIEVWKLDMASYDSVQKFAARVVTELPRVDIFIANAGIAPGSYRTAEDNESSITVNVVSTFLLAALVMPKMKSTAATFKTRPTFTITSSDVHGHTTFPQKSAPDGQIIATVNDKATAEKIWDDMYPISKLLEVLGVRSIAEQNPASKFPVTINCVNPGLCHSELGRDFPTIGFWLIKFFLARTTEVGSRTLVHAGSQGEDSHGQYMSDCEIGTPAPFVTSVEGKETQDRVWNELVKKLDAIKPGVTSNF.

4 residues coordinate NADP(+): Leu-33, Lys-58, Asp-83, and Asn-110. Catalysis depends on Ser-163, which acts as the Proton donor. The NADP(+) site is built by Tyr-200 and Lys-204. The active-site Proton acceptor is Tyr-200. Lys-204 acts as the Lowers pKa of active site Tyr in catalysis.

The protein belongs to the short-chain dehydrogenases/reductases (SDR) family.

Its pathway is secondary metabolite biosynthesis. Short chain dehydrogenase; part of the gene cluster that mediates the biosynthesis of the dimeric xanthones cryptosporioptides. The pathway begins with the synthesis of atrochrysone thioester by the polyketide synthase dmx-nrPKS. The atrochrysone carboxyl ACP thioesterase dmxR1 then breaks the thioester bond and releases the atrochrysone carboxylic acid from dmx-nrPKS. Atrochrysone carboxylic acid is decarboxylated by the decarboxylase dmxR15, and oxidized by the anthrone oxygenase dmxR16 to yield emodin. Emodin is then reduced to emodin hydroquinone by the oxidoreductase dmxR7. A-ring reduction by the short chain dehydrogenase dmxR18, dehydration by the scytalone dehydratase-like protein dmxR17 and probable spontaneous re-oxidation, results in overall deoxygenation to chrysophanol. Baeyer-Villiger oxidation by the Baeyer-Villiger monooxygenase (BVMO) dmxR6 then yields monodictylactone in equilibrium with monodictyphenone. In the case of the cryptosporioptides biosynthesis, monodictylactone is reduced at C-12 to an alcohol (by the short chain dehydrogenases dmxR12 or dmxR8) and hydroxylated at C-5 by dmxR9, yielding the electron-rich aromatic which could eliminate H(2)O to form the ortho-quinonemethide, followed by tautomerisation to paraquinone and complete the formal reduction to produce the 10-methylgroup. Conjugate addition of C-4a-OH to the resulting paraquinone by the monooxygenase dmxR10 then gives cyclohexadienone, which is then reduced at C-5 by the short chain dehydrogenase dmxR3 to give the dihydroxanthone. The 6,7-epoxide in the cryptosporioptides could be introduced by the cytochrome P450 monooxygenase dmxL3. The highly reducing PKS dmxL2 manufactures butyrate, which is further carboxylated by dmxL1 to form ethylmalonate. It is not yet clear whether the carboxylation occurs while the butyrate is attached to the ACP of dmxL2, but this unusual fungal metabolite could then be esterified to O-5 by the O-acetyltransferase dmxR13. Finally, dimerization performed by dmxR5 gives the observed dimers cryptosporioptides A, B and C as the final products of the pathway. This chain is Short chain dehydrogenase/reductase dmxR8, found in Cryptosporiopsis sp. (strain 8999).